The primary structure comprises 117 residues: Large ribosomal subunit protein uL18 (117 aa).

The protein belongs to the universal ribosomal protein uL18 family. In terms of assembly, part of the 50S ribosomal subunit; part of the 5S rRNA/L5/L18/L25 subcomplex. Contacts the 5S and 23S rRNAs.

In terms of biological role, this is one of the proteins that bind and probably mediate the attachment of the 5S RNA into the large ribosomal subunit, where it forms part of the central protuberance. The protein is Large ribosomal subunit protein uL18 of Thioalkalivibrio sulfidiphilus (strain HL-EbGR7).